The following is a 302-amino-acid chain: Aspartate carbamoyltransferase catalytic subunit (302 aa).

2 residues coordinate carbamoyl phosphate: Arg-51 and Thr-52. Lys-80 lines the L-aspartate pocket. Arg-101, His-129, and Gln-132 together coordinate carbamoyl phosphate. Positions 162 and 223 each coordinate L-aspartate. Carbamoyl phosphate-binding residues include Leu-261 and Pro-262.

The protein belongs to the aspartate/ornithine carbamoyltransferase superfamily. ATCase family. Heterododecamer (2C3:3R2) of six catalytic PyrB chains organized as two trimers (C3), and six regulatory PyrI chains organized as three dimers (R2).

It carries out the reaction carbamoyl phosphate + L-aspartate = N-carbamoyl-L-aspartate + phosphate + H(+). It participates in pyrimidine metabolism; UMP biosynthesis via de novo pathway; (S)-dihydroorotate from bicarbonate: step 2/3. Functionally, catalyzes the condensation of carbamoyl phosphate and aspartate to form carbamoyl aspartate and inorganic phosphate, the committed step in the de novo pyrimidine nucleotide biosynthesis pathway. This Chromobacterium violaceum (strain ATCC 12472 / DSM 30191 / JCM 1249 / CCUG 213 / NBRC 12614 / NCIMB 9131 / NCTC 9757 / MK) protein is Aspartate carbamoyltransferase catalytic subunit.